The primary structure comprises 524 residues: Cytochrome P450 4F3 (524 aa).

Residues 15-35 (AASPWLLLLLVGASCLLAYIL) traverse the membrane as a helical segment. Cysteine 468 is a heme binding site.

Belongs to the cytochrome P450 family. Heme is required as a cofactor.

It is found in the endoplasmic reticulum membrane. Its subcellular location is the microsome membrane. The enzyme catalyses leukotriene B4 + reduced [NADPH--hemoprotein reductase] + O2 = 18-hydroxy-leukotriene B4 + oxidized [NADPH--hemoprotein reductase] + H2O + H(+). The catalysed reaction is leukotriene B4 + reduced [NADPH--hemoprotein reductase] + O2 = 19-hydroxy-leukotriene B4 + oxidized [NADPH--hemoprotein reductase] + H2O + H(+). The protein operates within lipid metabolism; leukotriene B4 degradation. Its function is as follows. A cytochrome P450 monooxygenase involved in the metabolism of the pro-inflammatory lipid mediator leukotriene B4 (LTB4). Hydroxylates at the omega-1 and omega-2 positions LTB4. This oxidation step leads to LTB4 inactivation, which is postulated to be a crucial part of the resolution of inflammation. Mechanistically, uses molecular oxygen inserting one oxygen atom into a substrate, and reducing the second into a water molecule, with two electrons provided by NADPH via cytochrome P450 reductase (CPR; NADPH-ferrihemoprotein reductase). In Rattus norvegicus (Rat), this protein is Cytochrome P450 4F3.